The chain runs to 306 residues: 4-hydroxy-tetrahydrodipicolinate synthase (306 aa).

Thr-49 is a binding site for pyruvate. Residue Tyr-136 is the Proton donor/acceptor of the active site. Lys-164 acts as the Schiff-base intermediate with substrate in catalysis. Ile-207 provides a ligand contact to pyruvate.

It belongs to the DapA family. Homotetramer; dimer of dimers.

The protein localises to the cytoplasm. The catalysed reaction is L-aspartate 4-semialdehyde + pyruvate = (2S,4S)-4-hydroxy-2,3,4,5-tetrahydrodipicolinate + H2O + H(+). Its pathway is amino-acid biosynthesis; L-lysine biosynthesis via DAP pathway; (S)-tetrahydrodipicolinate from L-aspartate: step 3/4. Catalyzes the condensation of (S)-aspartate-beta-semialdehyde [(S)-ASA] and pyruvate to 4-hydroxy-tetrahydrodipicolinate (HTPA). The protein is 4-hydroxy-tetrahydrodipicolinate synthase of Haloarcula marismortui (strain ATCC 43049 / DSM 3752 / JCM 8966 / VKM B-1809) (Halobacterium marismortui).